Consider the following 291-residue polypeptide: Glycinyltransferase (291 aa).

Glutamate 243 is a catalytic residue.

It belongs to the thymidine aminotransferase family.

The enzyme catalyses 5-phosphomethyl-dUMP in DNA + glycine = 5-N(alpha)-glycyl-dTMP in DNA + phosphate. Functionally, transfers glycine to 5-phosphomethyl-2'-deoxyuridine (5-PmdU) to produce 5-Nalpha-glycinylthymidine (Nalpha-GlyT) as a step in the pathway leading to thymidine hypermodifications in the viral genome. As a final result of the pathway of hypermodification, 5-aminoethyl-2'-deoxyuridine (5-NedU) substitutes for about 30% of thymidines in the viral DNA. These modifications probably prevent degradation of viral genome by the host restriction-modification antiviral defense system. In Pseudomonas phage M6, this protein is Glycinyltransferase.